The following is a 165-amino-acid chain: Transcriptional repressor NrdR (165 aa).

The segment at Cys3–Cys34 is a zinc-finger region. The ATP-cone domain maps to Pro49–Glu139.

Belongs to the NrdR family. Zn(2+) is required as a cofactor.

Functionally, negatively regulates transcription of bacterial ribonucleotide reductase nrd genes and operons by binding to NrdR-boxes. The polypeptide is Transcriptional repressor NrdR (Colwellia psychrerythraea (strain 34H / ATCC BAA-681) (Vibrio psychroerythus)).